Here is a 186-residue protein sequence, read N- to C-terminus: uncharacterized protein (186 aa).

This is an uncharacterized protein from Caenorhabditis elegans.